Consider the following 454-residue polypeptide: Probable DNA primase large subunit (454 aa).

[4Fe-4S] cluster is bound by residues Cys-280, Cys-359, Cys-375, and Cys-415.

It belongs to the eukaryotic-type primase large subunit family. In terms of assembly, heterodimer of a small subunit and a large subunit. The cofactor is [4Fe-4S] cluster.

Functionally, DNA primase is the polymerase that synthesizes small RNA primers for the Okazaki fragments made during discontinuous DNA replication. This is Probable DNA primase large subunit from Arabidopsis thaliana (Mouse-ear cress).